The primary structure comprises 76 residues: Sec-independent protein translocase protein TatA (76 aa).

The chain crosses the membrane as a helical span at residues 1 to 21; that stretch reads MGSFSIWHWLIVLVIVMLIFG. The disordered stretch occupies residues 47–76; that stretch reads NADKPAEEAQPTQQVGGHTIDVEVKEKTKS. Over residues 66-76 the composition is skewed to basic and acidic residues; it reads IDVEVKEKTKS.

It belongs to the TatA/E family. The Tat system comprises two distinct complexes: a TatABC complex, containing multiple copies of TatA, TatB and TatC subunits, and a separate TatA complex, containing only TatA subunits. Substrates initially bind to the TatABC complex, which probably triggers association of the separate TatA complex to form the active translocon.

Its subcellular location is the cell inner membrane. Part of the twin-arginine translocation (Tat) system that transports large folded proteins containing a characteristic twin-arginine motif in their signal peptide across membranes. TatA could form the protein-conducting channel of the Tat system. The polypeptide is Sec-independent protein translocase protein TatA (Dechloromonas aromatica (strain RCB)).